A 983-amino-acid chain; its full sequence is Nuclear factor NF-kappa-B p105 subunit (983 aa).

Residues 47-372 (PYLQIIEQPK…EVQRKRQKLM (326 aa)) enclose the RHD domain. C66 bears the S-nitrosocysteine mark. At S342 the chain carries Phosphoserine; by PKA. The Nuclear localization signal motif lies at 365–370 (QRKRQK). The segment at 377 to 397 (DGYGGGSGAGGGGMFGGGGGG) is GRR. Residues 423–454 (KSNAGMKHELSNSTVKKDEESSDKQSDKWDTK) form a disordered region. Positions 428-454 (MKHELSNSTVKKDEESSDKQSDKWDTK) are enriched in basic and acidic residues. ANK repeat units lie at residues 540–569 (NGDN…DMNY), 579–608 (LYQT…NVNL), 612–641 (HGNS…ASSM), 648–677 (EGLS…DVNA), 682–712 (SGRT…DVDS), 716–745 (DGTT…DPHV), and 769–799 (PGTT…AVSE). One can recognise a Death domain in the interval 804–891 (QGPLRELNES…EAIEVIQKAL (88 aa)). The residue at position 938 (S938) is a Phosphoserine.

As to quaternary structure, active NF-kappa-B is a heterodimer of an about 50 kDa DNA-binding subunit and the weak DNA-binding subunit p65. Two heterodimers might form a labile tetramer. In terms of processing, generation of the NF-kappa-B p50 (Nuclear factor NF-kappa-B p50 subunit) transcription factor takes place both cotranslationally and post-translationally via non-mutually exclusive mechanisms. A cotranslational processing allows the production of both p50 and p105 (Nuclear factor NF-kappa-B p105 subunit) from a single NFKB1 mRNA. While translation occurs, the particular unfolded structure after the GRR repeat region acts as a substrate for the proteasome, promoting degradation of the C-terminus. The GRR acts as a proteasomal 'stop signal', protecting the region upstream of the GRR from degradation and promoting generation of p50. It is unclear if limited proteasome degradation during cotranslational processing depends on ubiquitination. NF-kappa-B p50 is also generated post-translationally following ubiquitination by the KPC complex, leading to limited processing by the proteasome downstream of the GRR region, thereby generating p50. Phosphorylation at the C-terminus by IKBKB/IKKB acts as a signal for ubiquitination and promotes either complete degradation or processing to generate the NF-kappa-B p50 (Nuclear factor NF-kappa-B p50 subunit). Phosphorylation at Ser-938 are required for BTRC/BTRCP-mediated ubiquitination and proteolysis. Phosphorylation at Ser-938 is also required for ubiquitination by the KPC complex and limited processing to generate NF-kappa-B p50 (Nuclear factor NF-kappa-B p50 subunit). Post-translationally, polyubiquitinated at multiple Lys residues in the C-terminus. Polyubiquitinated by the SCF(FBXW11) and SCF(BTRC) complexes following phosphorylation at Ser-938, leading to its complete degradation. In contrast, polyubiquitination by the KPC complex following phosphorylation at Ser-938 leads to limited proteosomal processing and generation of the active NF-kappa-B p50 (Nuclear factor NF-kappa-B p50 subunit). In terms of processing, S-nitrosylation of Cys-66 affects DNA binding. The covalent modification of cysteine by 15-deoxy-Delta12,14-prostaglandin-J2 is autocatalytic and reversible. It may occur as an alternative to other cysteine modifications, such as S-nitrosylation and S-palmitoylation.

Its subcellular location is the cytoplasm. It is found in the nucleus. In terms of biological role, P105 is the precursor of the active p50 subunit (Nuclear factor NF-kappa-B p50 subunit) of the nuclear factor NF-kappa-B. The precursor protein itself does not bind to DNA. Acts as a cytoplasmic retention of attached NF-kappa-B proteins by p105. Constitutes the active form, which associates with RELA/p65 to form the NF-kappa-B p65-p50 complex to form a transcription factor. Together with RELA/p65, binds to the kappa-B consensus sequence 5'-GGRNNYYCC-3', located in the enhancer region of genes involved in immune response and acute phase reactions. In Gallus gallus (Chicken), this protein is Nuclear factor NF-kappa-B p105 subunit (NFKB1).